An 860-amino-acid chain; its full sequence is Leucine--tRNA ligase (860 aa).

A 'HIGH' region motif is present at residues Pro-42–His-52. The 'KMSKS' region motif lies at Lys-619 to Ser-623. ATP is bound at residue Lys-622.

This sequence belongs to the class-I aminoacyl-tRNA synthetase family.

Its subcellular location is the cytoplasm. It catalyses the reaction tRNA(Leu) + L-leucine + ATP = L-leucyl-tRNA(Leu) + AMP + diphosphate. This Escherichia coli (strain K12 / MC4100 / BW2952) protein is Leucine--tRNA ligase.